The primary structure comprises 252 residues: Flagellar L-ring protein (252 aa).

The N-terminal stretch at 1 to 25 (MSKSVPLQRIVLVAALMATGGLAGG) is a signal peptide. The N-palmitoyl cysteine moiety is linked to residue Cys-26. Cys-26 carries the S-diacylglycerol cysteine lipid modification.

Belongs to the FlgH family. As to quaternary structure, the basal body constitutes a major portion of the flagellar organelle and consists of four rings (L,P,S, and M) mounted on a central rod.

It is found in the cell outer membrane. Its subcellular location is the bacterial flagellum basal body. Assembles around the rod to form the L-ring and probably protects the motor/basal body from shearing forces during rotation. The protein is Flagellar L-ring protein of Rhodopseudomonas palustris (strain ATCC BAA-98 / CGA009).